We begin with the raw amino-acid sequence, 156 residues long: 6,7-dimethyl-8-ribityllumazine synthase (156 aa).

Residues F22, 56–58 (AME), and 80–82 (AVI) each bind 5-amino-6-(D-ribitylamino)uracil. 85–86 (ET) is a (2S)-2-hydroxy-3-oxobutyl phosphate binding site. The active-site Proton donor is the H88. F113 is a 5-amino-6-(D-ribitylamino)uracil binding site. Residue R127 coordinates (2S)-2-hydroxy-3-oxobutyl phosphate.

It belongs to the DMRL synthase family.

The catalysed reaction is (2S)-2-hydroxy-3-oxobutyl phosphate + 5-amino-6-(D-ribitylamino)uracil = 6,7-dimethyl-8-(1-D-ribityl)lumazine + phosphate + 2 H2O + H(+). The protein operates within cofactor biosynthesis; riboflavin biosynthesis; riboflavin from 2-hydroxy-3-oxobutyl phosphate and 5-amino-6-(D-ribitylamino)uracil: step 1/2. In terms of biological role, catalyzes the formation of 6,7-dimethyl-8-ribityllumazine by condensation of 5-amino-6-(D-ribitylamino)uracil with 3,4-dihydroxy-2-butanone 4-phosphate. This is the penultimate step in the biosynthesis of riboflavin. In Kosmotoga olearia (strain ATCC BAA-1733 / DSM 21960 / TBF 19.5.1), this protein is 6,7-dimethyl-8-ribityllumazine synthase.